We begin with the raw amino-acid sequence, 140 residues long: Small ribosomal subunit protein uS12 (140 aa).

Disordered stretches follow at residues 1–20 (MPTI…VKSD) and 35–55 (QTNV…TMTP). 3-methylthioaspartic acid is present on Asp102. The tract at residues 121 to 140 (DGRMQGRSKYGTKRPKAAKK) is disordered. Positions 130–140 (YGTKRPKAAKK) are enriched in basic residues.

This sequence belongs to the universal ribosomal protein uS12 family. In terms of assembly, part of the 30S ribosomal subunit. Contacts proteins S8 and S17. May interact with IF1 in the 30S initiation complex.

Its function is as follows. With S4 and S5 plays an important role in translational accuracy. Functionally, interacts with and stabilizes bases of the 16S rRNA that are involved in tRNA selection in the A site and with the mRNA backbone. Located at the interface of the 30S and 50S subunits, it traverses the body of the 30S subunit contacting proteins on the other side and probably holding the rRNA structure together. The combined cluster of proteins S8, S12 and S17 appears to hold together the shoulder and platform of the 30S subunit. This chain is Small ribosomal subunit protein uS12, found in Exiguobacterium sp. (strain ATCC BAA-1283 / AT1b).